Here is a 239-residue protein sequence, read N- to C-terminus: tRNA (guanine-N(7)-)-methyltransferase (239 aa).

S-adenosyl-L-methionine-binding residues include Glu-68, Glu-93, Asp-120, and Asp-143. Residue Asp-143 is part of the active site. Residues Lys-147, Asp-180, and 217–220 contribute to the substrate site; that span reads TKFE.

Belongs to the class I-like SAM-binding methyltransferase superfamily. TrmB family.

The catalysed reaction is guanosine(46) in tRNA + S-adenosyl-L-methionine = N(7)-methylguanosine(46) in tRNA + S-adenosyl-L-homocysteine. It functions in the pathway tRNA modification; N(7)-methylguanine-tRNA biosynthesis. Its function is as follows. Catalyzes the formation of N(7)-methylguanine at position 46 (m7G46) in tRNA. The protein is tRNA (guanine-N(7)-)-methyltransferase of Vibrio cholerae serotype O1 (strain ATCC 39315 / El Tor Inaba N16961).